Here is a 212-residue protein sequence, read N- to C-terminus: Ribonuclease HII (212 aa).

The RNase H type-2 domain occupies 1-206; it reads MICGVDEAGK…VKNLLHQKNQ (206 aa). The a divalent metal cation site is built by Asp-6, Glu-7, and Asp-101.

It belongs to the RNase HII family. Mn(2+) serves as cofactor. It depends on Mg(2+) as a cofactor.

The protein resides in the cytoplasm. The enzyme catalyses Endonucleolytic cleavage to 5'-phosphomonoester.. Functionally, endonuclease that specifically degrades the RNA of RNA-DNA hybrids. This chain is Ribonuclease HII, found in Methanospirillum hungatei JF-1 (strain ATCC 27890 / DSM 864 / NBRC 100397 / JF-1).